The following is a 378-amino-acid chain: Cytochrome b (378 aa).

Transmembrane regions (helical) follow at residues 35–55 (FGSLLGLVLSIQLVTGIFLAM), 79–101 (WIIRLVHANGASFFFICLYCHIG), 114–134 (TWIMGVLLFILVMAAAFLGYV), and 180–200 (FFSLHFLVPFLVSLGAMLHIF). Heme b is bound by residues histidine 85 and histidine 99. 2 residues coordinate heme b: histidine 184 and histidine 198. Position 203 (histidine 203) interacts with a ubiquinone. 4 helical membrane-spanning segments follow: residues 226-246 (YSAKDLLGFFFMFFFIIFISF), 290-310 (LGGVLGLLCALLVLFSLPLTH), 326-346 (FFWLFIVSFLMLTIGGGQPVC), and 350-370 (VMCSQVWSCLYFTYFILCGPL).

The protein belongs to the cytochrome b family. The main subunits of complex b-c1 are: cytochrome b, cytochrome c1 and the Rieske protein. Requires heme b as cofactor.

The protein localises to the mitochondrion inner membrane. Component of the ubiquinol-cytochrome c reductase complex (complex III or cytochrome b-c1 complex) that is part of the mitochondrial respiratory chain. The b-c1 complex mediates electron transfer from ubiquinol to cytochrome c. Contributes to the generation of a proton gradient across the mitochondrial membrane that is then used for ATP synthesis. The chain is Cytochrome b (mt:Cyt-b) from Paraspadella gotoi (Arrow worm).